The primary structure comprises 394 residues: Mannosyl-3-phosphoglycerate synthase (394 aa).

The protein belongs to the glycosyltransferase 2 family.

It localises to the cytoplasm. It catalyses the reaction (2R)-3-phosphoglycerate + GDP-alpha-D-mannose = 2-O-(alpha-D-mannosyl)-3-phosphoglycerate + GDP + H(+). Its pathway is carbohydrate biosynthesis; 2-(alpha-D-mannosyl)-D-glycerate biosynthesis; 2-(alpha-D-mannosyl)-D-glycerate from GDP-alpha-D-mannose (MPG route): step 1/2. Functionally, transfers a mannosyl group from GDP-mannose to phosphoglycerate to form mannosyl-3-phosphoglycerate (MPG). This chain is Mannosyl-3-phosphoglycerate synthase (mngA), found in Pyrococcus furiosus (strain ATCC 43587 / DSM 3638 / JCM 8422 / Vc1).